Reading from the N-terminus, the 231-residue chain is MQFDIITLFPDFFTSPLQSGLLAKALERDIARVNLVNLRDFAHDKHRRVDDEPYGGGVGMLLKPEPIFEAIESLEILPPREIVLMTPQGEPLHQALLKTWAGSYQQLILICGHYEGVDERVCEHLVTREVSLGDFVLTCGEIPALAIINGVTRLLPGTVGKAESLKLESFEAGLLDYPQYTRPPVFRGWQVPPVLRSGNHQDIADWRYQQQLDRTKERRPDIWQKWLEEQD.

S-adenosyl-L-methionine contacts are provided by residues Gly112 and 132 to 137 (LGDFVL).

The protein belongs to the RNA methyltransferase TrmD family. As to quaternary structure, homodimer.

The protein localises to the cytoplasm. The enzyme catalyses guanosine(37) in tRNA + S-adenosyl-L-methionine = N(1)-methylguanosine(37) in tRNA + S-adenosyl-L-homocysteine + H(+). Its function is as follows. Specifically methylates guanosine-37 in various tRNAs. The protein is tRNA (guanine-N(1)-)-methyltransferase of Microcystis aeruginosa (strain NIES-843 / IAM M-2473).